The primary structure comprises 403 residues: Phosphoglycerate kinase (403 aa).

Residues 21–23 (DFN), Arg36, 59–62 (HLGR), Arg119, and Arg154 contribute to the substrate site. Residues Lys207, Gly299, Glu330, and 357–360 (GGDA) each bind ATP.

It belongs to the phosphoglycerate kinase family. As to quaternary structure, monomer.

The protein localises to the cytoplasm. It carries out the reaction (2R)-3-phosphoglycerate + ATP = (2R)-3-phospho-glyceroyl phosphate + ADP. The protein operates within carbohydrate degradation; glycolysis; pyruvate from D-glyceraldehyde 3-phosphate: step 2/5. The chain is Phosphoglycerate kinase (pgk) from Chlamydia muridarum (strain MoPn / Nigg).